Consider the following 1036-residue polypeptide: Lethal(2) giant larvae protein homolog 1 (1036 aa).

WD repeat units lie at residues S38–L71, V78–F119, V139–L175, S199–F233, L239–P271, A289–V331, V339–L373, T395–S473, Q517–I592, and T601–S662. S662 carries the phosphoserine modification. Residues R667–T677 are compositionally biased toward basic residues. The interval R667–N688 is disordered. The segment covering A679 to N688 has biased composition (polar residues). 4 WD repeats span residues V722–Q782, A791–K843, L848–S901, and V915–A938. T957 carries the post-translational modification Phosphothreonine. Residues S964, S982, and S989 each carry the phosphoserine modification. The disordered stretch occupies residues P980–E1002.

Belongs to the WD repeat L(2)GL family. Associated with nonmuscle myosin II heavy chain. Interacts with PRKCI/aPKC, PARD6B/Par-6 and PARD6A. Interacts with STX4A. Interacts with RAB10 (GDP-bound form); the interaction is direct and promotes RAB10 association with membranes and activation through competition with the Rab inhibitor GDI1. Interacts with DCAF1. Post-translationally, phosphorylated by PRKCI. Widely expressed. Expressed in brain, ovary, testis, with moderate expression in lever, uterus, lung and kidney.

Its subcellular location is the early endosome membrane. It is found in the golgi apparatus. The protein localises to the trans-Golgi network membrane. The protein resides in the cell projection. It localises to the axon. Its subcellular location is the golgi apparatus membrane. It is found in the cytoplasm. The protein localises to the cytoskeleton. Its function is as follows. Cortical cytoskeleton protein found in a complex involved in maintaining cell polarity and epithelial integrity. Involved in the regulation of mitotic spindle orientation, proliferation, differentiation and tissue organization of neuroepithelial cells. Involved in axonogenesis through RAB10 activation thereby regulating vesicular membrane trafficking toward the axonal plasma membrane. The polypeptide is Lethal(2) giant larvae protein homolog 1 (LLGL1) (Bos taurus (Bovine)).